Consider the following 362-residue polypeptide: MSFNTFGHLFRVTTFGESHGVAIGCVVDGCPPLIPLTEADIQGDLDRRRPGQSRFTTQRQEADQVKILSGVMVHPETGVQVTTGTPIALLIENTDQRSKDYSDIQNKFRPGHADFTYEAKYGIRDYRGGGRSSARETASRVAAGAIARKVIAGMTVRGALVQIGPHKIDRDKWDWDEIGNNPFFCPDKDKAAFYADYLDGIRKSGSSIGAVVEIVAEGVPAGLGAPIYAKLDGDLAAALMSINAVKGVEIGDGFASAELTGEQNADEMRTGNHGPAFLSNHAGGILGGISTGQPVVARFAVKPTSSILTPRKTVDRTGHDTEILTKGRHDPCVGIRAVPVGEAMVACVLADHLLRHRGQVGG.

NADP(+)-binding residues include R48 and R54. Residues 131 to 133, 243 to 244, G287, 302 to 306, and R328 each bind FMN; these read RSS, NA, and KPTSS.

The protein belongs to the chorismate synthase family. Homotetramer. The cofactor is FMNH2.

It carries out the reaction 5-O-(1-carboxyvinyl)-3-phosphoshikimate = chorismate + phosphate. Its pathway is metabolic intermediate biosynthesis; chorismate biosynthesis; chorismate from D-erythrose 4-phosphate and phosphoenolpyruvate: step 7/7. Catalyzes the anti-1,4-elimination of the C-3 phosphate and the C-6 proR hydrogen from 5-enolpyruvylshikimate-3-phosphate (EPSP) to yield chorismate, which is the branch point compound that serves as the starting substrate for the three terminal pathways of aromatic amino acid biosynthesis. This reaction introduces a second double bond into the aromatic ring system. The polypeptide is Chorismate synthase (Rhodopseudomonas palustris (strain ATCC BAA-98 / CGA009)).